The primary structure comprises 242 residues: Small ribosomal subunit protein uS2 (242 aa).

It belongs to the universal ribosomal protein uS2 family.

The polypeptide is Small ribosomal subunit protein uS2 (Shouchella clausii (strain KSM-K16) (Alkalihalobacillus clausii)).